The sequence spans 20 residues: Venom protease (20 aa).

This sequence belongs to the peptidase S1 family. Post-translationally, contains 3 disulfide bonds. In terms of processing, N-glycosylated. In terms of tissue distribution, expressed by the venom duct.

It is found in the secreted. This is Venom protease from Bombus terrestris (Buff-tailed bumblebee).